The primary structure comprises 143 residues: Fluoride-specific ion channel FluC (143 aa).

4 helical membrane-spanning segments follow: residues 3–23 (AVVW…GSGL), 41–61 (WGTL…LIWL), 76–96 (IVGL…CLVF), and 103–123 (LMVG…VFLG). Na(+)-binding residues include glycine 81 and threonine 84.

It belongs to the fluoride channel Fluc/FEX (TC 1.A.43) family.

It localises to the cell inner membrane. The enzyme catalyses fluoride(in) = fluoride(out). Na(+) is not transported, but it plays an essential structural role and its presence is essential for fluoride channel function. Its function is as follows. Fluoride-specific ion channel. Important for reducing fluoride concentration in the cell, thus reducing its toxicity. In Xylella fastidiosa (strain 9a5c), this protein is Fluoride-specific ion channel FluC.